A 40-amino-acid polypeptide reads, in one-letter code: Large ribosomal subunit protein bL36 (40 aa).

The protein belongs to the bacterial ribosomal protein bL36 family.

The protein is Large ribosomal subunit protein bL36 of Corynebacterium urealyticum (strain ATCC 43042 / DSM 7109).